A 486-amino-acid chain; its full sequence is Hexosaminidase D (486 aa).

The active-site Proton donor is the Glu149.

The protein belongs to the glycosyl hydrolase 20 family. In terms of assembly, homodimer; disulfide-linked. As to expression, expressed in synovial fibroblasts and synovial membranes.

The protein localises to the cytoplasm. The protein resides in the nucleus. It is found in the extracellular vesicle. It carries out the reaction Hydrolysis of terminal non-reducing N-acetyl-D-hexosamine residues in N-acetyl-beta-D-hexosaminides.. Its activity is regulated as follows. Inhibited by O-(2-acetamido-2-deoxy-D-glucopyranosylidene)amino N-phenylcarbamate (PUGNAc). Inhibited by galacto-NAG-thiazoline. Functionally, has hexosaminidase activity. Responsible for the cleavage of the monosaccharides N-acetylglucosamine (GlcNAc) and N-acetylgalactosamine (GalNAc) from cellular substrates. Has a preference for galactosaminide over glucosaminide substrates. The protein is Hexosaminidase D of Homo sapiens (Human).